The chain runs to 426 residues: Enolase (426 aa).

Residue Gln162 participates in (2R)-2-phosphoglycerate binding. Catalysis depends on Glu204, which acts as the Proton donor. Asp241, Glu284, and Asp311 together coordinate Mg(2+). (2R)-2-phosphoglycerate contacts are provided by Lys336, Arg365, Ser366, and Lys387. Lys336 functions as the Proton acceptor in the catalytic mechanism.

The protein belongs to the enolase family. Mg(2+) serves as cofactor.

The protein localises to the cytoplasm. It is found in the secreted. The protein resides in the cell surface. It carries out the reaction (2R)-2-phosphoglycerate = phosphoenolpyruvate + H2O. It participates in carbohydrate degradation; glycolysis; pyruvate from D-glyceraldehyde 3-phosphate: step 4/5. Catalyzes the reversible conversion of 2-phosphoglycerate (2-PG) into phosphoenolpyruvate (PEP). It is essential for the degradation of carbohydrates via glycolysis. This Acidithiobacillus ferrooxidans (strain ATCC 23270 / DSM 14882 / CIP 104768 / NCIMB 8455) (Ferrobacillus ferrooxidans (strain ATCC 23270)) protein is Enolase.